We begin with the raw amino-acid sequence, 539 residues long: MDPGTLLDKLESGDQELVQKALAEYNQENSQCFFFNAEQREERKKLGELVIKFLNRDLQPSCQMACLETIRILSRDKHALSPFTGRSAIQTLAQYAGLDYSEEMEMPSIPDGESAVEALKGLCNIIYNSVEAQEVAKELRLVCGLARRLKLYNETRSSHESKFFDLRLLFLLTALSVDMRKQLAQELRGVSLLTDALESTLALKWSDIYEVVTDRLAPPLGKEETERVMEILKTLFNITFDISRREVDEEDAALYRHLAAILRHCLLRQCDGEDRTEEFHGHTVNLLVNLPLMCLDVLLTPKVEQGSVEYMGMNMDTVEVLIQFLDRRLDRGHKLRETLTPVLNLLTESSRVHRETRKFLRAKVLPPLRDVKNRPEVGNTLRNKLVRLMTHVDTDVKHCAAEFLFVLCKENVSRFVKYTGYGNAAGLLAARGLLAGGRGEGRYSEDEDTDTEEYREAKPNINPVTGRVEEKQPNPMDGMTEEQKEYEAMKLVNMFDKLSREQIIQPMGVTSDGRLEPLDEAAQKMLQRQESSDLESDSD.

It belongs to the synembryn family.

It is found in the cytoplasm. The protein localises to the cell cortex. Chaperone that specifically binds and folds nascent G alpha proteins prior to G protein heterotrimer formation, promoting their stability and activity: folds GNAI1, GNAO1, GNA13 and GNAQ. Does not fold G(s) G-alpha proteins GNAS nor GNAL. Also acts as a guanine nucleotide exchange factor (GEF) for G alpha proteins by stimulating exchange of bound GDP for free GTP. This chain is Chaperone Ric-8A (ric8a), found in Xenopus tropicalis (Western clawed frog).